The primary structure comprises 251 residues: Chromobox protein homolog 7 (251 aa).

One can recognise a Chromo domain in the interval 11 to 69 (FAVESIRKKRVRKGKVEYLVKWKGWPPKYSTWEPEEHILDPRLVMAYEEKEERDRASGY). The disordered stretch occupies residues 190–220 (EPAAQPPEEEADADLAEGPPPWTPALPSSEV). The interval 223–236 (TDITANSITVTFRE) is required for cellular lifespan extension.

Component of a PRC1-like complex. Interacts with RING1 and RNF2/RING1B, but not with BMI1, EED or EZH2. Interacts with PCGF1, PCGF2, PCGF3, PCGF5 and PCGF6.

The protein localises to the nucleus. In terms of biological role, component of a Polycomb group (PcG) multiprotein PRC1-like complex, a complex class required to maintain the transcriptionally repressive state of many genes, including Hox genes, throughout development. PcG PRC1 complex acts via chromatin remodeling and modification of histones; it mediates monoubiquitination of histone H2A 'Lys-119', rendering chromatin heritably changed in its expressibility. Promotes histone H3 trimethylation at 'Lys-9' (H3K9me3). Binds to trimethylated lysine residues in histones, and possibly also other proteins. Regulator of cellular lifespan by maintaining the repression of CDKN2A, but not by inducing telomerase activity. The chain is Chromobox protein homolog 7 (CBX7) from Homo sapiens (Human).